The primary structure comprises 199 residues: uncharacterized protein (199 aa).

6 helical membrane passes run 1 to 21 (MEQF…TFIF), 28 to 48 (IAVS…IALY), 51 to 71 (LNAA…YLGM), 83 to 103 (LVAA…WFII), 127 to 147 (QLVL…FVIQ), and 154 to 174 (AVGG…LFGI).

The protein localises to the cell membrane. This is an uncharacterized protein from Bacillus subtilis (strain 168).